The following is a 135-amino-acid chain: Nucleoside diphosphate kinase (135 aa).

The ATP site is built by lysine 9, tyrosine 57, arginine 85, threonine 91, arginine 102, and asparagine 112. Histidine 115 functions as the Pros-phosphohistidine intermediate in the catalytic mechanism.

The protein belongs to the NDK family. Homotetramer. The cofactor is Mg(2+).

Its subcellular location is the cytoplasm. It catalyses the reaction a 2'-deoxyribonucleoside 5'-diphosphate + ATP = a 2'-deoxyribonucleoside 5'-triphosphate + ADP. The enzyme catalyses a ribonucleoside 5'-diphosphate + ATP = a ribonucleoside 5'-triphosphate + ADP. Major role in the synthesis of nucleoside triphosphates other than ATP. The ATP gamma phosphate is transferred to the NDP beta phosphate via a ping-pong mechanism, using a phosphorylated active-site intermediate. The protein is Nucleoside diphosphate kinase of Thermoanaerobacter pseudethanolicus (strain ATCC 33223 / 39E) (Clostridium thermohydrosulfuricum).